The chain runs to 261 residues: CD40 ligand (261 aa).

The Cytoplasmic segment spans residues 1 to 22; sequence MIETYSQPSPRSVAAGPPVSMK. A helical; Signal-anchor for type II membrane protein transmembrane segment spans residues 23–43; sequence IFMYLLTVFLITQMIGSALFA. At 44–240 the chain is on the extracellular side; that stretch reads AYLHRRLDKI…LQPGASVFVN (197 aa). The THD domain occupies 122–261; it reads IAAHVISEAS…GFTSFGLLKL (140 aa). Cys178 and Cys218 are oxidised to a cystine. Asn240 is a glycosylation site (N-linked (GlcNAc...) asparagine).

Belongs to the tumor necrosis factor family. In terms of assembly, homotrimer. Interacts with CD28. CD40 ligand, soluble form: Exists as either a monomer or a homotrimer. Forms a ternary complex between CD40 and integrins for CD40-CD40LG signaling. In terms of processing, the soluble form derives from the membrane form by proteolytic processing.

The protein resides in the cell membrane. It is found in the cell surface. The protein localises to the secreted. Its function is as follows. Cytokine that acts as a ligand to CD40/TNFRSF5. Costimulates T-cell proliferation and cytokine production. Its cross-linking on T-cells generates a costimulatory signal which enhances the production of IL4 and IL10 in conjunction with the TCR/CD3 ligation and CD28 costimulation. Induces the activation of NF-kappa-B. Induces the activation of kinases MAPK8 and PAK2 in T-cells. Mediates B-cell proliferation in the absence of co-stimulus as well as IgE production in the presence of IL4. Involved in immunoglobulin class switching. Acts as a ligand for integrins, specifically ITGA5:ITGB1 and ITGAV:ITGB3; both integrins and the CD40 receptor are required for activation of CD40-CD40LG signaling, which have cell-type dependent effects, such as B-cell activation, NF-kappa-B signaling and anti-apoptotic signaling. The chain is CD40 ligand (CD40LG) from Sus scrofa (Pig).